The primary structure comprises 519 residues: MLTARLLLPRLLCLQGRTTSYSTAAALPNPIPNPEICYNKLFINNEWHDAVSKKTFPTVNPTTGEVIGHVAEGDRADVDLAVKAAREAFRLGSPWRRMDASERGRLLNRLADLVERDRVYLASLETLDNGKPFQESYVLDLDEVIKVYRYFAGWADKWHGKTIPMDGEHFCFTRHEPVGVCGQIIPWNFPLVMQGWKLAPALATGNTVVMKVAEQTPLSALYLASLIKEAGFPPGVVNIITGYGPTAGAAIAQHMDVDKVAFTGSTEVGHLIQKAAGESNLKRVTLELGGKSPSIVLADADMEHAVDQCHEALFFNMGQCCCAGSRTFVEESIYREFLERTVEKAKQRKVGNPFELDTQQGPQVDKEQFERILGYIRLGQKEGAKLLCGGERLGERGFFIKPTVFGDVQDGMRIAKEEIFGPVQPLFKFKKIEEVIQRANNTRYGLAAAVFTRDLDKAIYFTQALQAGTVWVNTYNIVTCHTPFGGFKESGNGRELGEDGLRAYTEVKTVTIKVPEKNS.

Residues 1–19 (MLTARLLLPRLLCLQGRTT) constitute a mitochondrion transit peptide. At lysine 53 the chain carries N6-acetyllysine. Lysine 54 is modified (N6-acetyllysine; alternate). Position 54 is an N6-succinyllysine; alternate (lysine 54). N6-succinyllysine is present on lysine 83. Residue 264 to 269 (GSTEVG) coordinates NAD(+). The active-site Proton acceptor is the glutamate 287. Cysteine 321 serves as the catalytic Nucleophile. Residues lysine 366, lysine 385, lysine 401, lysine 416, and lysine 428 each carry the N6-acetyllysine; alternate modification. An N6-succinyllysine; alternate mark is found at lysine 366, lysine 385, lysine 401, lysine 416, and lysine 428. The residue at position 431 (lysine 431) is an N6-acetyllysine.

The protein belongs to the aldehyde dehydrogenase family. In terms of assembly, homotetramer.

It localises to the mitochondrion matrix. It carries out the reaction an aldehyde + NAD(+) + H2O = a carboxylate + NADH + 2 H(+). It participates in alcohol metabolism; ethanol degradation; acetate from ethanol: step 2/2. Its function is as follows. ALDHs play a major role in the detoxification of alcohol-derived acetaldehyde. They are involved in the metabolism of corticosteroids, biogenic amines, neurotransmitters, and lipid peroxidation. This Mus musculus (Mouse) protein is Aldehyde dehydrogenase X, mitochondrial (Aldh1b1).